Reading from the N-terminus, the 121-residue chain is Large ribosomal subunit protein uL14 (121 aa).

Belongs to the universal ribosomal protein uL14 family. Part of the 50S ribosomal subunit. Forms a cluster with proteins L3 and L19. In the 70S ribosome, L14 and L19 interact and together make contacts with the 16S rRNA in bridges B5 and B8.

Binds to 23S rRNA. Forms part of two intersubunit bridges in the 70S ribosome. This Prochlorococcus marinus (strain SARG / CCMP1375 / SS120) protein is Large ribosomal subunit protein uL14.